We begin with the raw amino-acid sequence, 228 residues long: Cytidylate kinase (228 aa).

12 to 20 (GPSGSGKGT) lines the ATP pocket.

It belongs to the cytidylate kinase family. Type 1 subfamily.

It localises to the cytoplasm. It carries out the reaction CMP + ATP = CDP + ADP. It catalyses the reaction dCMP + ATP = dCDP + ADP. In Pseudomonas entomophila (strain L48), this protein is Cytidylate kinase.